The sequence spans 987 residues: Pentatricopeptide repeat-containing protein At1g06710, mitochondrial (987 aa).

The transit peptide at 1–42 (MNKTVVRCLLSRSHHPLIHFSTNLSLLHRVFTCSRYLTARFM) directs the protein to the mitochondrion. PPR repeat units lie at residues 164–198 (TAPV…DKEV), 199–233 (FGEF…RFRP), 234–268 (SRST…NLRM), 269–299 (DGFT…ENFV), 301–335 (DTVF…SCLP), 336–370 (NVVT…GCYP), 371–405 (SPKI…GHMP), 406–446 (GYVV…GVVL), 447–481 (NKIN…GFIP), 482–516 (DTST…GLVA), 517–551 (DVYT…GCTP), 552–586 (NVVT…GCLP), 587–621 (NIVT…KDVP), 638–672 (NVVT…GCEP), 673–707 (NQIV…GFPA), 708–742 (TLYT…SCAP), 743–777 (NVVI…GCQP), 778–812 (NVVT…GVAP), 813–847 (NYVT…HWPT), 881–915 (FLSV…SATL), 918–952 (YSST…GVIP), and 953–987 (EMQS…VCPL).

The protein belongs to the PPR family. P subfamily.

It localises to the mitochondrion. This is Pentatricopeptide repeat-containing protein At1g06710, mitochondrial from Arabidopsis thaliana (Mouse-ear cress).